The sequence spans 638 residues: MFAPLGLFRDIPCPQREECSLIACLFSHRDLNSAPAAQDQVLEQKEPAKLPPKRLKLEPRPEAKETPKDDLRHVSDSGRSTPVKKTTAPATNAENISPVSRQPNIPKNTATAPIKRELNANTGSSIPPRRAPKEALNPRMIQKSPATYNVRMAILKKLHGTLCSLNDQLAKDKALEDKCLILTPDELITMALDEEEKVAKESPTVYSNVVKLRIVKLSRMSKEDWAKELKDYLNKKYYKIKAEPVQKEPKPFKTDLSVEEEIAVASQLITPLQGLEDFGYVTRVPTAEEIEIAKRGVAEAKGWEKCERCNARFQVFPGRREDGTLTSGGTCTYHPGKSFYPPRKKTDHITGTMREGYFTCCNQKLGESSGCTTGATHVYKVSETKRLASILQFEKTPENPDLHNPTPICFDCEMGYTTLGMELIRLTAVSWPEGKKVLDVLVRPLGEVLDLNSRFSGVFPEHYTNALPYSTAPTKSSAPSSSSPSQLQLVSSPAAARTLLFNLLTPSTPLIGHAIDNDLNACRIIHPTVIDTAILYPHPGGGLPYRMSLRTLAKKHLDREIQTGGASGKQGHDSVEDALATGDLVRVKAGLVWGRLKEKGWIVEEGRLVAPDSSSNTVSMQTKLGEGAGAKRAREGTS.

The tract at residues 37 to 136 (AQDQVLEQKE…PPRRAPKEAL (100 aa)) is disordered. Positions 55-76 (LKLEPRPEAKETPKDDLRHVSD) are enriched in basic and acidic residues. Polar residues predominate over residues 77–111 (SGRSTPVKKTTAPATNAENISPVSRQPNIPKNTAT). The region spanning 408-584 (ICFDCEMGYT…VEDALATGDL (177 aa)) is the Exonuclease domain. Polar residues predominate over residues 612–622 (DSSSNTVSMQT). Positions 612 to 638 (DSSSNTVSMQTKLGEGAGAKRAREGTS) are disordered.

Belongs to the REXO1/REXO3 family.

It is found in the cytoplasm. The protein localises to the nucleus. In terms of biological role, 3' to 5' exoribonuclease required for proper 3' end maturation of MRP RNA and of the U5L snRNA. In Emericella nidulans (strain FGSC A4 / ATCC 38163 / CBS 112.46 / NRRL 194 / M139) (Aspergillus nidulans), this protein is RNA exonuclease 3 (rex3).